We begin with the raw amino-acid sequence, 150 residues long: Large ribosomal subunit protein bL9 (150 aa).

It belongs to the bacterial ribosomal protein bL9 family.

In terms of biological role, binds to the 23S rRNA. The protein is Large ribosomal subunit protein bL9 of Limosilactobacillus fermentum (strain NBRC 3956 / LMG 18251) (Lactobacillus fermentum).